Here is a 192-residue protein sequence, read N- to C-terminus: Ion-translocating oxidoreductase complex subunit A (192 aa).

The next 6 membrane-spanning stretches (helical) occupy residues Ala-5–Leu-25, Thr-39–Val-59, Ala-65–Val-85, Val-102–Leu-122, Ala-134–Ile-154, and Ala-171–Val-191.

It belongs to the NqrDE/RnfAE family. As to quaternary structure, the complex is composed of six subunits: RnfA, RnfB, RnfC, RnfD, RnfE and RnfG.

The protein resides in the cell inner membrane. Part of a membrane-bound complex that couples electron transfer with translocation of ions across the membrane. The polypeptide is Ion-translocating oxidoreductase complex subunit A (Thioalkalivibrio sulfidiphilus (strain HL-EbGR7)).